An 87-amino-acid polypeptide reads, in one-letter code: Large ribosomal subunit protein bL27 (87 aa).

The tract at residues 1-24 (MAHKKGTGSTRNGRDSRSQRLGVK) is disordered.

This sequence belongs to the bacterial ribosomal protein bL27 family.

This Crocosphaera subtropica (strain ATCC 51142 / BH68) (Cyanothece sp. (strain ATCC 51142)) protein is Large ribosomal subunit protein bL27.